A 214-amino-acid polypeptide reads, in one-letter code: MSGLFITFEGGEGAGKSTQIALLASHLRNHGFDPVITREPGGSPGAEAIRHVILSGNAETYGPAMEALLFAAARADHVDQLIRPALAEGRIVLCDRFIDSSRAYQGVTGNLDATYMAAIERIAIDGAMPDLTLVLDICAERGLSRAGKRRGSDTADRFEKEDIAVHEARRQAFLEIARQEPARCKVIDADRSQEKIADEIRSVVDTILTEKGLL.

Gly10 to Ser17 lines the ATP pocket.

This sequence belongs to the thymidylate kinase family.

It catalyses the reaction dTMP + ATP = dTDP + ADP. In terms of biological role, phosphorylation of dTMP to form dTDP in both de novo and salvage pathways of dTTP synthesis. This chain is Thymidylate kinase, found in Brucella suis biovar 1 (strain 1330).